A 531-amino-acid polypeptide reads, in one-letter code: Cytochrome P450 monooxygenase acuC (531 aa).

Residues 3 to 23 form a helical membrane-spanning segment; it reads PIVWLLGGAIALLVVVIRAAW. Cys447 is a binding site for heme.

This sequence belongs to the cytochrome P450 family. The cofactor is heme.

The protein resides in the endoplasmic reticulum membrane. The enzyme catalyses 3-methylphenol + reduced [NADPH--hemoprotein reductase] + O2 = 3-hydroxybenzyl alcohol + oxidized [NADPH--hemoprotein reductase] + H2O + H(+). It functions in the pathway secondary metabolite biosynthesis. In terms of biological role, cytochrome P450 monooxygenase; part of the gene cluster that mediates the biosynthesis of aculins. The pathway begins with the synthesis of 6-methylsalicylic acid by the polyketide synthase (PKS) acuA via condensation of acetate and malonate units. The 6-methylsalicylic acid decarboxylase acuB then catalyzes the decarboxylation of 6-methylsalicylic acid to yield m-cresol (also known as 3-methylphenol). These first reactions occur in the cytosol. The intermediate m-cresol is then transported into the endoplasmic reticulum where the cytochrome P450 monooxygenase acuC converts it to m-hydroxybenzyl alcohol, which is further converted to gentisyl alcohol by the cytochrome P450 monooxygenase acuD. Gentisyl alcohol is further oxidized by the oxidoreductase acuE that probably catalyzes hydroxylation of the aromatic ring. The aromatic system might then be opened by oxidation through a Baeyer-Villiger type of oxidation, which could be catalyzed by acuF, with the carboxylic acid at C-1 subsequently reduced to an aldehyde by acuG. Subsequently, a hemiacetal is formed, before the dehydrogenase acuH would reduce the double bond between C-4 and C-6. Finally, keto-enol tautomerism results in formation of aculinic acid, which exists as two diastereomers (both R/S configurations at C-1) by non-enzymatic hemiacetal formation. The carboxypeptidase acuI could be involved in the linking of aculinic acid to an aculene A moiety produced by the aculene biosynthesis cluster and which leads to the production of aculin A. AcuI may also be involved in the attachment of proline to aculinic acid to form epi-aculins A and B. This is Cytochrome P450 monooxygenase acuC from Aspergillus aculeatus (strain ATCC 16872 / CBS 172.66 / WB 5094).